The sequence spans 428 residues: Adenylosuccinate synthetase (428 aa).

GTP-binding positions include G12–K18 and G40–T42. Residue D13 is the Proton acceptor of the active site. Positions 13 and 40 each coordinate Mg(2+). IMP-binding positions include D13–K16, N38–H41, T129, R143, Q224, T239, and R303. The active-site Proton donor is H41. V299 to R305 lines the substrate pocket. GTP-binding positions include R305, K331–D333, and A410–G412.

The protein belongs to the adenylosuccinate synthetase family. As to quaternary structure, homodimer. The cofactor is Mg(2+).

It localises to the cytoplasm. The catalysed reaction is IMP + L-aspartate + GTP = N(6)-(1,2-dicarboxyethyl)-AMP + GDP + phosphate + 2 H(+). It participates in purine metabolism; AMP biosynthesis via de novo pathway; AMP from IMP: step 1/2. Functionally, plays an important role in the de novo pathway of purine nucleotide biosynthesis. Catalyzes the first committed step in the biosynthesis of AMP from IMP. The chain is Adenylosuccinate synthetase from Francisella tularensis subsp. holarctica (strain FTNF002-00 / FTA).